The following is a 129-amino-acid chain: Small ribosomal subunit protein uS11 (129 aa).

The protein belongs to the universal ribosomal protein uS11 family. In terms of assembly, part of the 30S ribosomal subunit.

Functionally, located on the platform of the 30S subunit. The protein is Small ribosomal subunit protein uS11 of Methanocaldococcus jannaschii (strain ATCC 43067 / DSM 2661 / JAL-1 / JCM 10045 / NBRC 100440) (Methanococcus jannaschii).